The chain runs to 517 residues: Ribose import ATP-binding protein RbsA (517 aa).

ABC transporter domains are found at residues 11-251 (LEMR…VGRD) and 263-507 (YDPG…ALAT). An ATP-binding site is contributed by 43–50 (GENGAGKS).

The protein belongs to the ABC transporter superfamily. Ribose importer (TC 3.A.1.2.1) family. As to quaternary structure, the complex is composed of an ATP-binding protein (RbsA), two transmembrane proteins (RbsC) and a solute-binding protein (RbsB).

Its subcellular location is the cell inner membrane. The catalysed reaction is D-ribose(out) + ATP + H2O = D-ribose(in) + ADP + phosphate + H(+). Its function is as follows. Part of the ABC transporter complex RbsABC involved in ribose import. Responsible for energy coupling to the transport system. This Burkholderia pseudomallei (strain K96243) protein is Ribose import ATP-binding protein RbsA.